Here is a 625-residue protein sequence, read N- to C-terminus: MAIRQLPEMLINQIAAGEVVERPASVVKELVENALDAGATRVDIELEEGGVRLIRIRDNGGGIAPDELPLAVSRHATSKIASLDDLETVATLGFRGEALPSIASVSRFTLTSRRHDAEHGSALEIDGGRLGEVVPRAHAPGTTVEVRELFFNVPARRKFLRAERTELGHIEEWLRSLALARPDVELRVSHNGKPSRRYKPGDLYSDARLGETLGEDFARQALRVDHSGAGLRLHGWVAQPHYSRASTDQQYLYVNGRSVRDRSVAHAVKMAYGDVLFHGRQPAYVLFLELDPARVDVNVHPAKHEVRFREARLIHDFVYRTLQDALAHTRAGATPNSIGSDGAGYTGATAGEMGNIASGGPANHGNAPGRSGSAYSYANWTPSQTPLGLRVDEARAAYSALYAPPPRNAPQSTGMPSMAGTGLPATSEDSGVPPLGYAIAQLHGIYILAENAEGLIVVDMHAAHERIVYERLKNAHDSIGLHAQPLLVPMTLAVGEREADTAEREADTLATLGFEITRAGPQSLHVRSIPALLANAEPEALLRDVLGDLREHGQSCRIASARDELLSTMACHGAVRANRRLTVPEMNALLRDMEATERSGQCNHGRPTWARFTLSDIDRWFLRGR.

Residues 404–427 (PPPRNAPQSTGMPSMAGTGLPATS) are disordered.

Belongs to the DNA mismatch repair MutL/HexB family.

Its function is as follows. This protein is involved in the repair of mismatches in DNA. It is required for dam-dependent methyl-directed DNA mismatch repair. May act as a 'molecular matchmaker', a protein that promotes the formation of a stable complex between two or more DNA-binding proteins in an ATP-dependent manner without itself being part of a final effector complex. The chain is DNA mismatch repair protein MutL from Xanthomonas oryzae pv. oryzae (strain MAFF 311018).